A 227-amino-acid polypeptide reads, in one-letter code: tRNA (guanine-N(7)-)-methyltransferase (227 aa).

Residues glutamate 57, glutamate 82, aspartate 109, and aspartate 132 each contribute to the S-adenosyl-L-methionine site. Residue aspartate 132 is part of the active site. Substrate contacts are provided by residues lysine 136, aspartate 168, and 205–208 (TKFE).

It belongs to the class I-like SAM-binding methyltransferase superfamily. TrmB family.

It catalyses the reaction guanosine(46) in tRNA + S-adenosyl-L-methionine = N(7)-methylguanosine(46) in tRNA + S-adenosyl-L-homocysteine. The protein operates within tRNA modification; N(7)-methylguanine-tRNA biosynthesis. Functionally, catalyzes the formation of N(7)-methylguanine at position 46 (m7G46) in tRNA. The polypeptide is tRNA (guanine-N(7)-)-methyltransferase (Leifsonia xyli subsp. xyli (strain CTCB07)).